Reading from the N-terminus, the 267-residue chain is Non-homologous end joining protein Ku (267 aa).

A Ku domain is found at 11 to 195 (AVGQVSCAVA…KVKGEMLELA (185 aa)). Residues 229–267 (GRKPKRKAAPKKAREPSDLMAALRESVAATERPRRRKAG) are disordered.

This sequence belongs to the prokaryotic Ku family. In terms of assembly, homodimer. Interacts with LigD.

With LigD forms a non-homologous end joining (NHEJ) DNA repair enzyme, which repairs dsDNA breaks with reduced fidelity. Binds linear dsDNA with 5'- and 3'- overhangs but not closed circular dsDNA nor ssDNA. Recruits and stimulates the ligase activity of LigD. This chain is Non-homologous end joining protein Ku, found in Cereibacter sphaeroides (strain KD131 / KCTC 12085) (Rhodobacter sphaeroides).